Reading from the N-terminus, the 494-residue chain is GlcNAc-binding protein A (494 aa).

An N-terminal signal peptide occupies residues 1-21 (MKLNKIMLAMVVMSISGTAMA). Residues 22-192 (HGYIENPPSR…TFYNMIDAEF (171 aa)) form the Chitin-binding type-4 domain. One can recognise a Chitin-binding type-3 domain in the interval 435–484 (APAWSNKSSYQAKDTVTHNGRIYMSKWWADKASVPGDAAVTDTTGNGSGW). A disordered region spans residues 474–494 (VTDTTGNGSGWGKVWEDKGAC).

It belongs to the GbpA family.

The protein localises to the secreted. Functionally, probably interacts with GlcNAc residues. May promote attachment to both epithelial cell surfaces and chitin. This is GlcNAc-binding protein A from Yersinia enterocolitica serotype O:8 / biotype 1B (strain NCTC 13174 / 8081).